An 867-amino-acid polypeptide reads, in one-letter code: Bifunctional cis-abienol synthase, chloroplastic (867 aa).

A chloroplast-targeting transit peptide spans 1-49 (MALPVYSLKSHIPITTIASAKMNYTPNKGMITANGRSRRIRLSPNKIVA). Residue Lys270 participates in substrate binding. The DXDD motif signature appears at 403 to 406 (DIDD). Substrate is bound at residue Lys490. 6 residues coordinate Mg(2+): Asp622, Asp626, Asn763, Asp764, Thr767, and Glu771. The short motif at 622–626 (DDLYD) is the DDXXD motif element.

The protein belongs to the terpene synthase family. Tpsd subfamily. It depends on Mg(2+) as a cofactor.

The protein localises to the plastid. Its subcellular location is the chloroplast. The enzyme catalyses 8-hydroxycopalyl diphosphate = cis-abienol + diphosphate. It catalyses the reaction (2E,6E,10E)-geranylgeranyl diphosphate + H2O = 8-hydroxycopalyl diphosphate. Its pathway is terpene metabolism; oleoresin biosynthesis. Functionally, involved in the biosynthesis of cis-abienol, a labdane diterpene that can be used as synthesis precursor of ambergris substitution fragance products. Bifunctional class I/II enzyme in which both the bicyclization and water capture occur in the class II active site, resulting in an intermediary labda-13-en-8-ol diphosphate, which undergoes cleavage of the diphosphate group and final deprotonation at the class I active site. No activity with copalyl diphosphate as substrate. This chain is Bifunctional cis-abienol synthase, chloroplastic (CAS), found in Abies balsamea (Balsam fir).